A 286-amino-acid polypeptide reads, in one-letter code: Bifunctional protein FolD (286 aa).

NADP(+) is bound by residues 166–168 (GAS) and Ile-232.

The protein belongs to the tetrahydrofolate dehydrogenase/cyclohydrolase family. In terms of assembly, homodimer.

The enzyme catalyses (6R)-5,10-methylene-5,6,7,8-tetrahydrofolate + NADP(+) = (6R)-5,10-methenyltetrahydrofolate + NADPH. It catalyses the reaction (6R)-5,10-methenyltetrahydrofolate + H2O = (6R)-10-formyltetrahydrofolate + H(+). It functions in the pathway one-carbon metabolism; tetrahydrofolate interconversion. Functionally, catalyzes the oxidation of 5,10-methylenetetrahydrofolate to 5,10-methenyltetrahydrofolate and then the hydrolysis of 5,10-methenyltetrahydrofolate to 10-formyltetrahydrofolate. The chain is Bifunctional protein FolD from Vibrio cholerae serotype O1 (strain ATCC 39541 / Classical Ogawa 395 / O395).